Consider the following 504-residue polypeptide: Plasma protease C1 inhibitor (504 aa).

Residues 1 to 22 form the signal peptide; sequence MASKLTPLTLLLLLLAGDRAFS. Positions 23–75 are disordered; the sequence is DSEVTSHSSQDPLVVQEGSRDSVPERDGSRSPIEHTGQSSTWPTTSGSTKISN. A compositionally biased stretch (polar residues) spans 24 to 33; the sequence is SEVTSHSSQD. Residues 40–55 show a composition bias toward basic and acidic residues; it reads GSRDSVPERDGSRSPI. Positions 58–75 are enriched in polar residues; the sequence is TGQSSTWPTTSGSTKISN. Asparagine 75, asparagine 83, asparagine 107, asparagine 243, and asparagine 356 each carry an N-linked (GlcNAc...) asparagine glycan. A disordered region spans residues 94–132; it reads AQLPEDSPSQSPVNSSSPPSTASAPPTQAPTEPLCPEPL. Over residues 100-125 the composition is skewed to low complexity; sequence SPSQSPVNSSSPPSTASAPPTQAPTE.

Belongs to the serpin family. Interacts with MASP1.

Its subcellular location is the secreted. Functionally, serine protease inhibitor, which acrs as a regulator of the classical complement pathway. Forms a proteolytically inactive stoichiometric complex with the C1r or C1s proteases. May also regulate blood coagulation, fibrinolysis and the generation of kinins. Very efficient inhibitor of FXIIa. Inhibits chymotrypsin and kallikrein. This Rattus norvegicus (Rat) protein is Plasma protease C1 inhibitor (Serping1).